A 494-amino-acid polypeptide reads, in one-letter code: uncharacterized protein (494 aa).

This is an uncharacterized protein from Acanthamoeba polyphaga (Amoeba).